The chain runs to 325 residues: NADH-quinone oxidoreductase subunit H (325 aa).

8 consecutive transmembrane segments (helical) span residues 11-31 (ILLTILKAVVILLVVVTCGAF), 81-101 (VIFTLAPMIAFTSLLLAFAIV), 114-134 (IGILFFLMMAGLAVYAVLFAG), 154-174 (LSYEVFLGLSLMGVVAQAGSF), 186-206 (VWNVIPQFFGFITFAIAGVAV), 237-257 (FFVGEYIGIVTISALMVTLFF), 265-285 (LPPFIWFALKTAFFMMMFILI), and 304-324 (ICLPLTLINLLVTAAVILWQA).

Belongs to the complex I subunit 1 family. NDH-1 is composed of 13 different subunits. Subunits NuoA, H, J, K, L, M, N constitute the membrane sector of the complex.

It is found in the cell inner membrane. It catalyses the reaction a quinone + NADH + 5 H(+)(in) = a quinol + NAD(+) + 4 H(+)(out). NDH-1 shuttles electrons from NADH, via FMN and iron-sulfur (Fe-S) centers, to quinones in the respiratory chain. The immediate electron acceptor for the enzyme in this species is believed to be ubiquinone. Couples the redox reaction to proton translocation (for every two electrons transferred, four hydrogen ions are translocated across the cytoplasmic membrane), and thus conserves the redox energy in a proton gradient. This subunit may bind ubiquinone. In Escherichia coli O7:K1 (strain IAI39 / ExPEC), this protein is NADH-quinone oxidoreductase subunit H.